The sequence spans 345 residues: S-adenosylmethionine:tRNA ribosyltransferase-isomerase (345 aa).

The protein belongs to the QueA family. As to quaternary structure, monomer.

Its subcellular location is the cytoplasm. The enzyme catalyses 7-aminomethyl-7-carbaguanosine(34) in tRNA + S-adenosyl-L-methionine = epoxyqueuosine(34) in tRNA + adenine + L-methionine + 2 H(+). It functions in the pathway tRNA modification; tRNA-queuosine biosynthesis. Transfers and isomerizes the ribose moiety from AdoMet to the 7-aminomethyl group of 7-deazaguanine (preQ1-tRNA) to give epoxyqueuosine (oQ-tRNA). This is S-adenosylmethionine:tRNA ribosyltransferase-isomerase from Anaeromyxobacter dehalogenans (strain 2CP-C).